The following is a 499-amino-acid chain: MKPYGKIPDNSIKSLQDLMQLLKKSKDFITLEIASNNSSIVISYFRTLIDVNIFHEEVLTYIKEKSFNSLQDIHSVLPFENSKITNQIEDIQDSILNGYILIQYDTDKLNCLLVNVSKKEKRDITKAEIEYNIVGPQIAFVEDLDVNLNLVRRKLPTPYLQMKELKVGSLSNTTVAIVFIEGIVNDQNLQEIIKRVSQIKTDHVLDSTYLMQLIADNPNSIFPQFLNTERPDRVAAVLAEGKIALFVDGSPYAITLPTTLIDFFSTTEDYTMPWIIASFFRLLRLFAFIFSVLTTPLYVSILTYHYELIPKELLETLIISRSKVPFPPLIEALFLEITIELLREAGARLPTKVGLTVGIVGGIVIGQASVEASLTSNVLIIIVALSALSSFTAPIYRIGNTIRVIRFPFIISAHLLGLLGIVLTSSLLLARLLRTESLRRPYLFPFYPTRPTDWKDSIIRMPISAMFRRPIFSRSKQRFRFNPEEVEKNKILSRNDFDD.

Helical transmembrane passes span 285–305 (LFAF…LTYH), 376–396 (SNVL…APIY), and 409–429 (FIIS…SLLL).

This sequence belongs to the GerABKA family.

The protein resides in the membrane. In terms of biological role, required for the germination response to inosine. Has no role in L-alanine germination. This Bacillus cereus protein is Spore germination protein GerQA (gerQA).